Consider the following 119-residue polypeptide: Large ribosomal subunit protein uL14c (119 aa).

Belongs to the universal ribosomal protein uL14 family. Part of the 50S ribosomal subunit.

The protein localises to the plastid. It localises to the chloroplast. In terms of biological role, binds to 23S rRNA. The chain is Large ribosomal subunit protein uL14c from Ostreococcus tauri.